Consider the following 697-residue polypeptide: Heat shock protein homolog SSE1 (697 aa).

The segment covering 664–674 (EMAEKLAAQRA) has biased composition (low complexity). Residues 664-697 (EMAEKLAAQRAAEQKAQESKAESDKDAEGDIDLD) are disordered. The span at 675–691 (AEQKAQESKAESDKDAE) shows a compositional bias: basic and acidic residues.

It belongs to the heat shock protein 70 family.

The protein localises to the cytoplasm. The protein is Heat shock protein homolog SSE1 (SSE1) of Eremothecium gossypii (strain ATCC 10895 / CBS 109.51 / FGSC 9923 / NRRL Y-1056) (Yeast).